Here is a 228-residue protein sequence, read N- to C-terminus: Ion-translocating oxidoreductase complex subunit G (228 aa).

Residues 35–55 (ALSLGLVCALVAVALLLGNQL) traverse the membrane as a helical segment. The residue at position 197 (Thr-197) is an FMN phosphoryl threonine.

Belongs to the RnfG family. As to quaternary structure, the complex is composed of six subunits: RnfA, RnfB, RnfC, RnfD, RnfE and RnfG. FMN serves as cofactor.

It is found in the cell inner membrane. Its function is as follows. Part of a membrane-bound complex that couples electron transfer with translocation of ions across the membrane. The polypeptide is Ion-translocating oxidoreductase complex subunit G (Stutzerimonas stutzeri (Pseudomonas stutzeri)).